The following is a 254-amino-acid chain: 3-dehydroquinate dehydratase (254 aa).

3-dehydroquinate is bound by residues 47-49 and R83; that span reads EFR. H144 (proton donor/acceptor) is an active-site residue. K171 functions as the Schiff-base intermediate with substrate in the catalytic mechanism. R213, S232, and Q236 together coordinate 3-dehydroquinate.

It belongs to the type-I 3-dehydroquinase family. Homodimer.

The enzyme catalyses 3-dehydroquinate = 3-dehydroshikimate + H2O. The protein operates within metabolic intermediate biosynthesis; chorismate biosynthesis; chorismate from D-erythrose 4-phosphate and phosphoenolpyruvate: step 3/7. Functionally, involved in the third step of the chorismate pathway, which leads to the biosynthesis of aromatic amino acids. Catalyzes the cis-dehydration of 3-dehydroquinate (DHQ) and introduces the first double bond of the aromatic ring to yield 3-dehydroshikimate. This is 3-dehydroquinate dehydratase from Neisseria gonorrhoeae (strain ATCC 700825 / FA 1090).